The sequence spans 241 residues: Small ribosomal subunit protein uS3 (241 aa).

One can recognise a KH type-2 domain in the interval Val22–Glu91. Positions Glu218–Gln241 are disordered.

It belongs to the universal ribosomal protein uS3 family. In terms of assembly, part of the 30S ribosomal subunit.

Functionally, binds the lower part of the 30S subunit head. This is Small ribosomal subunit protein uS3 from Ignicoccus hospitalis (strain KIN4/I / DSM 18386 / JCM 14125).